The primary structure comprises 449 residues: Mycosin-1 (449 aa).

Residues 1–23 (MQRVAVMVLAVLLALFSAPPAWA) form the signal peptide. A disulfide bridge links C51 with C120. Positions 66 to 389 (PWANDYLRIQ…AGVIDPVAAL (324 aa)) constitute a Peptidase S8 domain. Catalysis depends on charge relay system residues D92 and H123. Disordered regions lie at residues 160–179 (FQPK…QTAG) and 240–259 (TGQD…SDPR). Over residues 170-179 (NDPNTTQTAG) the composition is skewed to polar residues. C206 and C244 are oxidised to a cystine. The Charge relay system role is filled by S334. The chain crosses the membrane as a helical span at residues 421 to 441 (ITAVVIAGATLAFALGIGALA).

This sequence belongs to the peptidase S8 family.

The protein resides in the cell membrane. In terms of biological role, may play a dual role in regulation of ESX-1 secretion and virulence. Acts as a protease that cleaves EspB. The protein is Mycosin-1 of Mycolicibacterium smegmatis (strain ATCC 700084 / mc(2)155) (Mycobacterium smegmatis).